We begin with the raw amino-acid sequence, 507 residues long: ATP synthase subunit alpha, chloroplastic (507 aa).

170 to 177 (GDRQTGKT) is an ATP binding site.

This sequence belongs to the ATPase alpha/beta chains family. In terms of assembly, F-type ATPases have 2 components, CF(1) - the catalytic core - and CF(0) - the membrane proton channel. CF(1) has five subunits: alpha(3), beta(3), gamma(1), delta(1), epsilon(1). CF(0) has four main subunits: a, b, b' and c.

It is found in the plastid. Its subcellular location is the chloroplast thylakoid membrane. It catalyses the reaction ATP + H2O + 4 H(+)(in) = ADP + phosphate + 5 H(+)(out). Functionally, produces ATP from ADP in the presence of a proton gradient across the membrane. The alpha chain is a regulatory subunit. This chain is ATP synthase subunit alpha, chloroplastic, found in Spinacia oleracea (Spinach).